The following is a 471-amino-acid chain: MTNQKQETKLWGGRFAEKTAELVELFNASVGFDQRLAEQDIRGSLAHVAMLGGQGILTAEEVSQITDGLNGVLADIRAGNFEWRLDREDVHMNVEAALRDRIGPVAGKLHTARSRNDQVAVDFRLFTKEAALDLAEQTRALRRVMLAEAEKHLQNEVILPGYTHLQVAQPILLAHWFMAYVAMLERDEGRFRDAAERMDESPLGSSALAGTPWPLDRHATAEALGFARPTANSLDGVGSRDFALEFLSACAILSAHLSRLSEELILYSTFEFGFITLPDSHTTGSSIMPQKKNPDVSELARGKAGRVFGNLMALLTVVKGTPLAYNKDLQEDKEGVFDSYDTLSIVLRLYAEMLPKTVWHADVTKAAAARGYSTATDVADYLARQGVPFREAHEVVGGLVGLASRSDRQLWELTDAELKAAHPLLSAEVAQKLTVEESVRSRQSYGGTAPERVREAVEAAKEKLRQETGQP.

This sequence belongs to the lyase 1 family. Argininosuccinate lyase subfamily.

It localises to the cytoplasm. It catalyses the reaction 2-(N(omega)-L-arginino)succinate = fumarate + L-arginine. Its pathway is amino-acid biosynthesis; L-arginine biosynthesis; L-arginine from L-ornithine and carbamoyl phosphate: step 3/3. This Deinococcus radiodurans (strain ATCC 13939 / DSM 20539 / JCM 16871 / CCUG 27074 / LMG 4051 / NBRC 15346 / NCIMB 9279 / VKM B-1422 / R1) protein is Argininosuccinate lyase.